Consider the following 97-residue polypeptide: Sm-like protein LSM3A (97 aa).

Ser2 carries the post-translational modification N-acetylserine. A Sm domain is found at 11 to 96 (EPLDLIRLSI…VILVSPPLRT (86 aa)).

This sequence belongs to the snRNP Sm proteins family. In terms of assembly, component of the heptameric LSM1-LSM7 complex that forms a seven-membered ring structure with a donut shape. The LSM subunits are arranged in the order LSM1, LSM2, LSM3, LSM6, LSM5, LSM7 and LSM4. Component of the heptameric LSM2-LSM8 complex that forms a seven-membered ring structure with a donut shape. The LSM subunits are arranged in the order LSM8, LSM2, LSM3, LSM6, LSM5, LSM7 and LSM4. LSM3A subunit interacts only with its two neighboring subunits, LSM2 and LSM6A or LSM6B. Expressed in roots, leaves, stems, flowers and siliques.

The protein resides in the cytoplasm. It is found in the nucleus. In terms of biological role, component of LSM protein complexes, which are involved in RNA processing. Component of the cytoplasmic LSM1-LSM7 complex which is involved in mRNA degradation by promoting decapping and leading to accurate 5'-3' mRNA decay. The cytoplasmic LSM1-LSM7 complex regulates developmental gene expression by the decapping of specific development-related transcripts. Component of the nuclear LSM2-LSM8 complex which is involved splicing nuclear mRNAs. LSM2-LSM8 binds directly to the U6 small nuclear RNAs (snRNAs) and is essential for accurate splicing of selected development-related mRNAs through the stabilization of the spliceosomal U6 snRNA. Plays a critical role in the regulation of development-related gene expression. This Arabidopsis thaliana (Mouse-ear cress) protein is Sm-like protein LSM3A.